The primary structure comprises 233 residues: Pyridoxine 5'-phosphate synthase (233 aa).

Position 6 (Asn6) interacts with 3-amino-2-oxopropyl phosphate. Position 8–9 (8–9 (DH)) interacts with 1-deoxy-D-xylulose 5-phosphate. Residue Arg17 participates in 3-amino-2-oxopropyl phosphate binding. Residue His42 is the Proton acceptor of the active site. Arg44 and His49 together coordinate 1-deoxy-D-xylulose 5-phosphate. The active-site Proton acceptor is the Glu69. Thr99 lines the 1-deoxy-D-xylulose 5-phosphate pocket. His186 functions as the Proton donor in the catalytic mechanism. 3-amino-2-oxopropyl phosphate-binding positions include Gly187 and 208–209 (GH).

It belongs to the PNP synthase family. As to quaternary structure, homooctamer; tetramer of dimers.

It is found in the cytoplasm. The enzyme catalyses 3-amino-2-oxopropyl phosphate + 1-deoxy-D-xylulose 5-phosphate = pyridoxine 5'-phosphate + phosphate + 2 H2O + H(+). Its pathway is cofactor biosynthesis; pyridoxine 5'-phosphate biosynthesis; pyridoxine 5'-phosphate from D-erythrose 4-phosphate: step 5/5. In terms of biological role, catalyzes the complicated ring closure reaction between the two acyclic compounds 1-deoxy-D-xylulose-5-phosphate (DXP) and 3-amino-2-oxopropyl phosphate (1-amino-acetone-3-phosphate or AAP) to form pyridoxine 5'-phosphate (PNP) and inorganic phosphate. This Anaplasma phagocytophilum (strain HZ) protein is Pyridoxine 5'-phosphate synthase.